A 218-amino-acid polypeptide reads, in one-letter code: Ribose-5-phosphate isomerase A (218 aa).

Substrate is bound by residues 28 to 31, 81 to 84, and 94 to 97; these read TGST, DGAD, and KGGG. Residue E103 is the Proton acceptor of the active site. Residue K121 coordinates substrate.

Belongs to the ribose 5-phosphate isomerase family. As to quaternary structure, homodimer.

The catalysed reaction is aldehydo-D-ribose 5-phosphate = D-ribulose 5-phosphate. It participates in carbohydrate degradation; pentose phosphate pathway; D-ribose 5-phosphate from D-ribulose 5-phosphate (non-oxidative stage): step 1/1. In terms of biological role, catalyzes the reversible conversion of ribose-5-phosphate to ribulose 5-phosphate. The polypeptide is Ribose-5-phosphate isomerase A (Vibrio vulnificus (strain CMCP6)).